Here is a 419-residue protein sequence, read N- to C-terminus: MSSPLKNALVTAMLAGGALSSPTKQHVGIPVNASPEVGPGKYSFKQVRNPNYKFNGPLSVKKTYLKYGVPIPAWLEDAVQNSTSGLAERSTGSATTTPIDSLDDAYITPVQIGTPAQTLNLDFDTGSSDLWVFSSETTASEVDGQTIYTPSKSTTAKLLSGATWSISYGDGSSSSGDVYTDTVSVGGLTVTGQAVESAKKVSSSFTEDSTIDGLLGLAFSTLNTVSPTQQKTFFDNAKASLDSPVFTADLGYHAPGTYNFGFIDTTAYTGSITYTAVSTKQGFWEWTSTGYAVGSGTFKSTSIDGIADTGTTLLYLPATVVSAYWAQVSGAKSSSSVGGYVFPCSATLPSFTFGVGSARIVIPGDYIDFGPISTGSSSCFGGIQSSAGIGINIFGDVALKAAFVVFNGATTPTLGFASK.

An N-terminal signal peptide occupies residues 1–20 (MSSPLKNALVTAMLAGGALS). Residues 21 to 89 (SPTKQHVGIP…QNSTSGLAER (69 aa)) constitute a propeptide, activation peptide. The Peptidase A1 domain occupies 106–417 (YITPVQIGTP…GATTPTLGFA (312 aa)). Catalysis depends on residues Asp-124 and Ser-288. Residues Cys-344 and Cys-379 are joined by a disulfide bond.

It belongs to the peptidase A1 family.

The catalysed reaction is Hydrolysis of proteins with specificity similar to that of pepsin A, prefers hydrophobic residues at P1 and P1', but does not cleave 14-Ala-|-Leu-15 in the B chain of insulin or Z-Glu-Tyr. Clots milk.. The sequence is that of Endothiapepsin (EAPA) from Cryphonectria parasitica (Chestnut blight fungus).